Consider the following 275-residue polypeptide: Large ribosomal subunit protein uL2 (275 aa).

The segment at 223–275 (VAMNPVDHPHGGGEGRTGEAREPVSPWGTPSKGFKTRRNKRTNNMIVQRRKRK) is disordered. Residues 229–244 (DHPHGGGEGRTGEARE) are compositionally biased toward basic and acidic residues.

The protein belongs to the universal ribosomal protein uL2 family. Part of the 50S ribosomal subunit. Forms a bridge to the 30S subunit in the 70S ribosome.

Its function is as follows. One of the primary rRNA binding proteins. Required for association of the 30S and 50S subunits to form the 70S ribosome, for tRNA binding and peptide bond formation. It has been suggested to have peptidyltransferase activity; this is somewhat controversial. Makes several contacts with the 16S rRNA in the 70S ribosome. The protein is Large ribosomal subunit protein uL2 of Bordetella petrii (strain ATCC BAA-461 / DSM 12804 / CCUG 43448).